The sequence spans 94 residues: Pyrimidine/purine nucleoside phosphorylase (94 aa).

It belongs to the nucleoside phosphorylase PpnP family.

It carries out the reaction a purine D-ribonucleoside + phosphate = a purine nucleobase + alpha-D-ribose 1-phosphate. The catalysed reaction is adenosine + phosphate = alpha-D-ribose 1-phosphate + adenine. The enzyme catalyses cytidine + phosphate = cytosine + alpha-D-ribose 1-phosphate. It catalyses the reaction guanosine + phosphate = alpha-D-ribose 1-phosphate + guanine. It carries out the reaction inosine + phosphate = alpha-D-ribose 1-phosphate + hypoxanthine. The catalysed reaction is thymidine + phosphate = 2-deoxy-alpha-D-ribose 1-phosphate + thymine. The enzyme catalyses uridine + phosphate = alpha-D-ribose 1-phosphate + uracil. It catalyses the reaction xanthosine + phosphate = alpha-D-ribose 1-phosphate + xanthine. Its function is as follows. Catalyzes the phosphorolysis of diverse nucleosides, yielding D-ribose 1-phosphate and the respective free bases. Can use uridine, adenosine, guanosine, cytidine, thymidine, inosine and xanthosine as substrates. Also catalyzes the reverse reactions. This is Pyrimidine/purine nucleoside phosphorylase from Aeromonas hydrophila subsp. hydrophila (strain ATCC 7966 / DSM 30187 / BCRC 13018 / CCUG 14551 / JCM 1027 / KCTC 2358 / NCIMB 9240 / NCTC 8049).